The sequence spans 63 residues: Large ribosomal subunit protein bL28 (63 aa).

It belongs to the bacterial ribosomal protein bL28 family.

The polypeptide is Large ribosomal subunit protein bL28 (Alkaliphilus metalliredigens (strain QYMF)).